The primary structure comprises 215 residues: tRNA (guanine-N(7)-)-methyltransferase (215 aa).

4 residues coordinate S-adenosyl-L-methionine: E44, E69, D96, and D118. D118 is an active-site residue. Residues K122, D154, and 191–194 (TEYE) each bind substrate.

The protein belongs to the class I-like SAM-binding methyltransferase superfamily. TrmB family.

The enzyme catalyses guanosine(46) in tRNA + S-adenosyl-L-methionine = N(7)-methylguanosine(46) in tRNA + S-adenosyl-L-homocysteine. It functions in the pathway tRNA modification; N(7)-methylguanine-tRNA biosynthesis. Catalyzes the formation of N(7)-methylguanine at position 46 (m7G46) in tRNA. The chain is tRNA (guanine-N(7)-)-methyltransferase from Exiguobacterium sp. (strain ATCC BAA-1283 / AT1b).